Reading from the N-terminus, the 301-residue chain is Troponin T, cardiac muscle (301 aa).

Positions 1 to 72 (MSDAEEVVEE…EAKDAEEGPV (72 aa)) are enriched in acidic residues. Disordered regions lie at residues 1 to 97 (MSDA…DGER) and 125 to 224 (NRKK…KKKI). Ser2 bears the N-acetylserine mark. At Ser2 the chain carries Phosphoserine; by CK2. 2 stretches are compositionally biased toward basic and acidic residues: residues 125 to 186 (NRKK…DEAR) and 206 to 224 (QTER…KKKI). Position 207 is a phosphothreonine; by PKC/PRKCA (Thr207). Ser211 is modified (phosphoserine; by PKC/PRKCA). Phosphothreonine; by PKC/PRKCA and RAF1 is present on Thr216. Phosphothreonine; by PKC/PRKCA is present on Thr297.

The protein belongs to the troponin T family. Phosphorylation at Thr-216 by PRKCA induces significant reduction in myofilament calcium sensitivity and actomyosin ATPase activity.

Functionally, troponin T is the tropomyosin-binding subunit of troponin, the thin filament regulatory complex which confers calcium-sensitivity to striated muscle actomyosin ATPase activity. The sequence is that of Troponin T, cardiac muscle (Tnnt2) from Mus musculus (Mouse).